A 199-amino-acid polypeptide reads, in one-letter code: Recombination protein RecR (199 aa).

A C4-type zinc finger spans residues 58–73 (CARCGNITSADLCDIC). In terms of domain architecture, Toprim spans 81-176 (GELCVVEDVA…QVTSLAQGVP (96 aa)).

Belongs to the RecR family.

Functionally, may play a role in DNA repair. It seems to be involved in an RecBC-independent recombinational process of DNA repair. It may act with RecF and RecO. This is Recombination protein RecR from Cereibacter sphaeroides (strain ATCC 17025 / ATH 2.4.3) (Rhodobacter sphaeroides).